Here is a 643-residue protein sequence, read N- to C-terminus: Threonine--tRNA ligase (643 aa).

The TGS domain maps to 1-61 (MIKVTLKDGS…KEDVSLSICT (61 aa)). Positions 240 to 540 (DHNKLGRELK…LIEKYAGAFP (301 aa)) are catalytic. 3 residues coordinate Zn(2+): Cys-335, His-386, and His-517.

It belongs to the class-II aminoacyl-tRNA synthetase family. In terms of assembly, homodimer. Zn(2+) is required as a cofactor.

It localises to the cytoplasm. It carries out the reaction tRNA(Thr) + L-threonine + ATP = L-threonyl-tRNA(Thr) + AMP + diphosphate + H(+). Its function is as follows. Catalyzes the attachment of threonine to tRNA(Thr) in a two-step reaction: L-threonine is first activated by ATP to form Thr-AMP and then transferred to the acceptor end of tRNA(Thr). Also edits incorrectly charged L-seryl-tRNA(Thr). This is Threonine--tRNA ligase from Clostridium botulinum (strain Eklund 17B / Type B).